A 55-amino-acid polypeptide reads, in one-letter code: Large ribosomal subunit protein bL33 (55 aa).

This sequence belongs to the bacterial ribosomal protein bL33 family.

The chain is Large ribosomal subunit protein bL33 from Acidiphilium cryptum (strain JF-5).